The chain runs to 741 residues: Ion-translocating oxidoreductase complex subunit C (741 aa).

4Fe-4S ferredoxin-type domains are found at residues 369–397 and 407–436; these read GEPQ…QQLY and KATT…VQYF. The [4Fe-4S] cluster site is built by C377, C380, C383, C387, C416, C419, C422, and C426. Positions 627–654 are disordered; the sequence is IARAKARKLEQQQQANAEPEEQVDPRKA.

It belongs to the 4Fe4S bacterial-type ferredoxin family. RnfC subfamily. The complex is composed of six subunits: RsxA, RsxB, RsxC, RsxD, RsxE and RsxG. [4Fe-4S] cluster serves as cofactor.

The protein localises to the cell inner membrane. Part of a membrane-bound complex that couples electron transfer with translocation of ions across the membrane. Required to maintain the reduced state of SoxR. The polypeptide is Ion-translocating oxidoreductase complex subunit C (Escherichia coli O127:H6 (strain E2348/69 / EPEC)).